We begin with the raw amino-acid sequence, 619 residues long: Chaperone protein HscA homolog (619 aa).

This sequence belongs to the heat shock protein 70 family.

In terms of biological role, chaperone involved in the maturation of iron-sulfur cluster-containing proteins. Has a low intrinsic ATPase activity which is markedly stimulated by HscB. This chain is Chaperone protein HscA homolog, found in Pseudomonas paraeruginosa (strain DSM 24068 / PA7) (Pseudomonas aeruginosa (strain PA7)).